We begin with the raw amino-acid sequence, 67 residues long: Cysteine-rich venom protein bucarin (67 aa).

Residues 13–58 (VDKHNALRRSVRPTARNMLQMEWNSNAAQNAKRFADRCTFAHSPPH) enclose the SCP domain.

Belongs to the CRISP family. Contains 8 disulfide bonds. As to expression, expressed by the venom gland.

It localises to the secreted. Functionally, blocks contraction of smooth muscle elicited by high potassium-induced depolarization, but does not block caffeine-stimulated contraction. May target voltage-gated calcium channels on smooth muscle. The sequence is that of Cysteine-rich venom protein bucarin from Bungarus candidus (Malayan krait).